Consider the following 189-residue polypeptide: dCTP deaminase, dUMP-forming (189 aa).

DCTP contacts are provided by residues 101–106 (KSSLGR), D119, 127–129 (TLE), Q148, Y162, and Q174. E129 (proton donor/acceptor) is an active-site residue. The disordered stretch occupies residues 163 to 189 (GSSEAGSKYQGQRGPTPSKAYLNFNRS).

The protein belongs to the dCTP deaminase family. In terms of assembly, homotrimer.

It carries out the reaction dCTP + 2 H2O = dUMP + NH4(+) + diphosphate. Its pathway is pyrimidine metabolism; dUMP biosynthesis; dUMP from dCTP: step 1/1. Bifunctional enzyme that catalyzes both the deamination of dCTP to dUTP and the hydrolysis of dUTP to dUMP without releasing the toxic dUTP intermediate. In Rhodococcus erythropolis (strain PR4 / NBRC 100887), this protein is dCTP deaminase, dUMP-forming.